A 230-amino-acid polypeptide reads, in one-letter code: Demethylmenaquinone methyltransferase (230 aa).

Residues Thr-62, Asp-80, 102–103 (DG), and Ser-119 each bind S-adenosyl-L-methionine.

The protein belongs to the class I-like SAM-binding methyltransferase superfamily. MenG/UbiE family.

The catalysed reaction is a 2-demethylmenaquinol + S-adenosyl-L-methionine = a menaquinol + S-adenosyl-L-homocysteine + H(+). It participates in quinol/quinone metabolism; menaquinone biosynthesis; menaquinol from 1,4-dihydroxy-2-naphthoate: step 2/2. In terms of biological role, methyltransferase required for the conversion of demethylmenaquinol (DMKH2) to menaquinol (MKH2). The protein is Demethylmenaquinone methyltransferase of Streptomyces griseus subsp. griseus (strain JCM 4626 / CBS 651.72 / NBRC 13350 / KCC S-0626 / ISP 5235).